The sequence spans 375 residues: Actin, cytoplasmic (375 aa).

This sequence belongs to the actin family.

It localises to the cytoplasm. The protein localises to the cytoskeleton. It catalyses the reaction ATP + H2O = ADP + phosphate + H(+). Actins are highly conserved proteins that are involved in various types of cell motility and are ubiquitously expressed in all eukaryotic cells. This is Actin, cytoplasmic from Sterkiella nova (Ciliate).